The chain runs to 205 residues: MSAIAPGLVLLAYLCGSISSAILVCRLAGLPDPRDSGSGNPGATNVLRIGGKGAAVAVLIFDVLKGMLPVWGAWALGLTPFWLGLVAIAACVGHIWPVFFHFRGGKGVATAFGAIAPIGLDLTGVMAGTWLLTILLSGYSSLGAIVSALIAPFYVWWFKPQYTFPVSMLSCLILLRHHDNIQRLWRRQESKIWTRMKKKKAPEQK.

Transmembrane regions (helical) follow at residues 4–24 (IAPG…AILV), 80–100 (PFWL…PVFF), 107–127 (GVAT…GVMA), 130–150 (WLLT…SALI), and 155–175 (VWWF…LILL).

The protein belongs to the PlsY family. In terms of assembly, probably interacts with PlsX.

It is found in the cell inner membrane. The enzyme catalyses an acyl phosphate + sn-glycerol 3-phosphate = a 1-acyl-sn-glycero-3-phosphate + phosphate. It functions in the pathway lipid metabolism; phospholipid metabolism. Functionally, catalyzes the transfer of an acyl group from acyl-phosphate (acyl-PO(4)) to glycerol-3-phosphate (G3P) to form lysophosphatidic acid (LPA). This enzyme utilizes acyl-phosphate as fatty acyl donor, but not acyl-CoA or acyl-ACP. The polypeptide is Glycerol-3-phosphate acyltransferase (Klebsiella pneumoniae (strain 342)).